A 433-amino-acid polypeptide reads, in one-letter code: MQVTVETLEGLQRRLNITVPAANIEDAVAAELRNIAKNRRFDGFRKGKVPMKMVAKMYGKAVRQDVLGEVMQRHFIEAIVKEKINPAGAPTFAPVEIGEGKDLVFTATFEVYPEVELKGLENIAVEKPAAEVTDADVAEMLETLRKQQATWKEVDEAAENGKRVSIDFVGSIDGVEFEGGKAENFPLEMGAGRMIPGFEDGIVGKTKGMEFVIDVTFPEDYHAENLKGKAAKFAIKVNKVEARELPELNDEFVARFGVAEGGVDALKAEVRKNMERELKQAIKARIKEQAIEGLVKENEIQVPSALIDQEINVLRQQAAQRFGGNVEAAAQLPRELFEEQAKRRVVVGLLLGEVIRTHELKADEEKVKALITEMATAYEDPSEVVSYYEQNQQLMNNMRNVALEEQAVDAIIAKAKVTEKAISFSELMNPVAA.

Residues 161 to 246 enclose the PPIase FKBP-type domain; sequence GKRVSIDFVG…VNKVEARELP (86 aa).

The protein belongs to the FKBP-type PPIase family. Tig subfamily.

Its subcellular location is the cytoplasm. The catalysed reaction is [protein]-peptidylproline (omega=180) = [protein]-peptidylproline (omega=0). In terms of biological role, involved in protein export. Acts as a chaperone by maintaining the newly synthesized protein in an open conformation. Functions as a peptidyl-prolyl cis-trans isomerase. The chain is Trigger factor from Vibrio cholerae serotype O1 (strain ATCC 39541 / Classical Ogawa 395 / O395).